The following is a 155-amino-acid chain: MKLRIISVGHKMPDWVQSACTEYTKRMPREMNVEIVEIKPDKRASGKNAEAVQEAEAKRILEAAGRDYLVALDEHGQEVTTLQLADKMRGWMESGRDVSLVIGGADGLHDSLKHKADWLWSLSKLTMPHGMVRVMLSEQLYRGLSVINNHPYHRE.

Residues leucine 72, glycine 103, and 122-127 each bind S-adenosyl-L-methionine; that span reads LSKLTM.

Belongs to the RNA methyltransferase RlmH family. In terms of assembly, homodimer.

The protein localises to the cytoplasm. It catalyses the reaction pseudouridine(1915) in 23S rRNA + S-adenosyl-L-methionine = N(3)-methylpseudouridine(1915) in 23S rRNA + S-adenosyl-L-homocysteine + H(+). Its function is as follows. Specifically methylates the pseudouridine at position 1915 (m3Psi1915) in 23S rRNA. This chain is Ribosomal RNA large subunit methyltransferase H, found in Methylobacillus flagellatus (strain ATCC 51484 / DSM 6875 / VKM B-1610 / KT).